We begin with the raw amino-acid sequence, 322 residues long: uncharacterized protein (322 aa).

Positions 34–286 (KFKQKIFKIP…QRLSKDKVPE (253 aa)) constitute a Radical SAM core domain. [4Fe-4S] cluster-binding residues include cysteine 50, cysteine 58, and cysteine 61.

Belongs to the radical SAM superfamily. Requires [4Fe-4S] cluster as cofactor.

This is an uncharacterized protein from Methanocaldococcus jannaschii (strain ATCC 43067 / DSM 2661 / JAL-1 / JCM 10045 / NBRC 100440) (Methanococcus jannaschii).